The chain runs to 128 residues: Calcitonin gene-related peptide 1 (128 aa).

The N-terminal stretch at 1–25 (MGLWKSSPFLAFSILVLCQAGGLQA) is a signal peptide. Residues 26–80 (APFRSALEGLPDPTALSEKEGRLLLAALVKAYVQRKNELEQEQEQETEGSSITAQ) constitute a propeptide that is removed on maturation. The segment at 63–83 (ELEQEQEQETEGSSITAQKRS) is disordered. Residues 74-83 (GSSITAQKRS) are compositionally biased toward polar residues. Residues C84 and C89 are joined by a disulfide bond. F119 is modified (phenylalanine amide). Residues 125-128 (DLRA) constitute a propeptide that is removed on maturation.

This sequence belongs to the calcitonin family.

It is found in the secreted. In terms of biological role, CGRP1/CALCA is a peptide hormone that induces vasodilation mediated by the CALCRL-RAMP1 receptor complex. Dilates a variety of vessels including the coronary, cerebral and systemic vasculature. Its abundance in the CNS also points toward a neurotransmitter or neuromodulator role. It also elevates platelet cAMP. CGRP1 can also bind and activate CALCR-RAMP1 (AMYR1) receptor complex. This is Calcitonin gene-related peptide 1 (CALCA) from Canis lupus familiaris (Dog).